Here is a 179-residue protein sequence, read N- to C-terminus: Ribosome maturation factor RimM (179 aa).

Residues 102–179 (DGEYYWYQLE…EMKVDWDADF (78 aa)) enclose the PRC barrel domain.

Belongs to the RimM family. Binds ribosomal protein uS19.

It localises to the cytoplasm. In terms of biological role, an accessory protein needed during the final step in the assembly of 30S ribosomal subunit, possibly for assembly of the head region. Essential for efficient processing of 16S rRNA. May be needed both before and after RbfA during the maturation of 16S rRNA. It has affinity for free ribosomal 30S subunits but not for 70S ribosomes. The polypeptide is Ribosome maturation factor RimM (Pseudomonas savastanoi pv. phaseolicola (strain 1448A / Race 6) (Pseudomonas syringae pv. phaseolicola (strain 1448A / Race 6))).